A 6668-amino-acid chain; its full sequence is Centrosome-associated protein CEP250 (6668 aa).

Coiled coils occupy residues 562 to 589 (KAFH…LQQD), 632 to 666 (TREL…LRAS), 873 to 988 (HTEC…LRSS), 1042 to 1087 (LRMS…HEAA), 1252 to 1307 (VEDL…AVSR), 1333 to 1427 (LESL…LEKK), 1501 to 1538 (RPAA…LGTQ), 1594 to 1688 (REAL…SEVA), 1896 to 1930 (HDIL…TTEK), 1975 to 2224 (EETL…AKQS), 2298 to 3272 (AEDE…LKME), 3298 to 3436 (QQEL…SRAE), 3526 to 3599 (LVQL…AKEE), 3697 to 3773 (CASL…EERR), 3856 to 4137 (TEML…VEAE), 4170 to 4486 (RRKL…LRER), 4515 to 5078 (LETL…FRRR), 5165 to 5202 (LASL…QETL), 5298 to 5731 (LREK…QHRV), and 5927 to 6119 (TQAL…LWRQ).

Proteolytically cleaved; only the full-length form localizes to the inner core, while processed version also localizes to the outer core during the onset of cell division.

It is found in the cytoplasm. The protein localises to the cytoskeleton. It localises to the microtubule organizing center. Its subcellular location is the centrosome. Part of the centrosome inner core complex. Required for the linking of centrosomal inner and outer cores. In Toxoplasma gondii (strain ATCC 50611 / Me49), this protein is Centrosome-associated protein CEP250.